Here is a 514-residue protein sequence, read N- to C-terminus: 2-isopropylmalate synthase (514 aa).

Positions 5 to 268 constitute a Pyruvate carboxyltransferase domain; it reads LIIFDTTLRD…DVGIDTTQIV (264 aa). Mn(2+)-binding residues include D14, H202, H204, and N239. A regulatory domain region spans residues 395 to 514; it reads KFVSLSQHSE…KDDKLNPQRS (120 aa).

This sequence belongs to the alpha-IPM synthase/homocitrate synthase family. LeuA type 1 subfamily. In terms of assembly, homodimer. Mn(2+) is required as a cofactor.

It is found in the cytoplasm. The catalysed reaction is 3-methyl-2-oxobutanoate + acetyl-CoA + H2O = (2S)-2-isopropylmalate + CoA + H(+). It functions in the pathway amino-acid biosynthesis; L-leucine biosynthesis; L-leucine from 3-methyl-2-oxobutanoate: step 1/4. In terms of biological role, catalyzes the condensation of the acetyl group of acetyl-CoA with 3-methyl-2-oxobutanoate (2-ketoisovalerate) to form 3-carboxy-3-hydroxy-4-methylpentanoate (2-isopropylmalate). This chain is 2-isopropylmalate synthase, found in Burkholderia multivorans (strain ATCC 17616 / 249).